The following is a 246-amino-acid chain: 23S rRNA (guanosine-2'-O-)-methyltransferase RlmB (246 aa).

Residues Gly198, Ile218, and Leu227 each coordinate S-adenosyl-L-methionine.

This sequence belongs to the class IV-like SAM-binding methyltransferase superfamily. RNA methyltransferase TrmH family. RlmB subfamily.

The protein localises to the cytoplasm. The enzyme catalyses guanosine(2251) in 23S rRNA + S-adenosyl-L-methionine = 2'-O-methylguanosine(2251) in 23S rRNA + S-adenosyl-L-homocysteine + H(+). In terms of biological role, specifically methylates the ribose of guanosine 2251 in 23S rRNA. The polypeptide is 23S rRNA (guanosine-2'-O-)-methyltransferase RlmB (Shewanella oneidensis (strain ATCC 700550 / JCM 31522 / CIP 106686 / LMG 19005 / NCIMB 14063 / MR-1)).